Reading from the N-terminus, the 177-residue chain is PBAN-type neuropeptides (177 aa).

A signal peptide spans 1–23; it reads MIVTGNPVCAIALLLCLVFRASG. Positions 24-54 are excised as a propeptide; the sequence is EYELEMSSGGSNDGRSPSNDFGSCTDGKCTK. The disordered stretch occupies residues 28–73; that stretch reads EMSSGGSNDGRSPSNDFGSCTDGKCTKRTTTTQESGISSGMWFGPR. The segment covering 31–45 has biased composition (polar residues); that stretch reads SGGSNDGRSPSNDFG. The segment covering 47 to 59 has biased composition (low complexity); the sequence is CTDGKCTKRTTTT. The residue at position 74 (L74) is a Leucine amide. A propeptide spanning residues 78–113 is cleaved from the precursor; sequence HKSNEKQQINPEIEMLVNALDQPGMRWTVITIPANE. A leucine amide mark is found at L124, L154, and L166. Residues 169-177 constitute a propeptide that is removed on maturation; sequence QSRSVSRKI.

This sequence belongs to the pyrokinin family. In terms of tissue distribution, pyrokinins (PK) 1 to 4 are expressed in the retrocerebral complex. PK 1 is expressed in central brain, anntennal lobes and abominal ganglia. PK 2 is expressed in optical lobes and in gnathal, thoracic and abdominal ganglia. PK 3 is expressed in optical lobes and in thoracic and abdominal ganglia (at protein level).

The protein localises to the secreted. Pyrokinins mediate visceral muscle contractile activity (myotropic activity). The sequence is that of PBAN-type neuropeptides from Camponotus floridanus (Florida carpenter ant).